We begin with the raw amino-acid sequence, 202 residues long: Superoxide dismutase [Mn/Fe] (202 aa).

4 residues coordinate Fe(3+): H27, H81, D163, and H167. 4 residues coordinate Mn(2+): H27, H81, D163, and H167.

The protein belongs to the iron/manganese superoxide dismutase family. It depends on Mn(2+) as a cofactor. Fe(3+) is required as a cofactor.

The catalysed reaction is 2 superoxide + 2 H(+) = H2O2 + O2. Destroys superoxide anion radicals which are normally produced within the cells and which are toxic to biological systems. Catalyzes the dismutation of superoxide anion radicals into O2 and H2O2 by successive reduction and oxidation of the transition metal ion at the active site. The sequence is that of Superoxide dismutase [Mn/Fe] (sodA) from Streptococcus agalactiae serotype V (strain ATCC BAA-611 / 2603 V/R).